The sequence spans 691 residues: Kinetochore protein NDC80 (691 aa).

The segment at 1 to 95 is disordered; it reads MQSSTSTDQH…LNDKSNSRNS (95 aa). Over residues 10–19 the composition is skewed to basic and acidic residues; sequence HVLHHMDPHR. Residues 20–42 show a composition bias toward polar residues; sequence FTSQIPTATSSQLRRRNSTNQGL. Thr-38 carries the post-translational modification Phosphothreonine. Residues 54–65 show a composition bias toward low complexity; it reads TISGTGIPTGGI. Thr-248 is subject to Phosphothreonine. 2 coiled-coil regions span residues 376–446 and 522–686; these read GKLE…SIKS and KKSI…FETE.

This sequence belongs to the NDC80/HEC1 family. Component of the NDC80 complex, which consists of NDC80, NUF2, SPC24 and SPC25. The NDC80 complex is formed by two subcomplexes, NDC80-NUF2 and SPC24-SPC25, which are joined end-to-end through their coiled-coil domains. It has a rod-like structure with a length of 570 Angstroms and globular domains at either end. The NDC80-NUF2 globular domains are probably directed to microtubules, the SPC24-SPC25 globular domains to the centromere. NDC80 probably interacts with SMC1 and SMC2. Also interacts with KIN3. Interacts with DMC1.

The protein resides in the nucleus. The protein localises to the chromosome. Its subcellular location is the centromere. It is found in the kinetochore. Acts as a component of the essential kinetochore-associated NDC80 complex, which is involved in chromosome segregation and spindle checkpoint activity. The sequence is that of Kinetochore protein NDC80 from Saccharomyces cerevisiae (strain ATCC 204508 / S288c) (Baker's yeast).